A 318-amino-acid chain; its full sequence is Olfactory receptor 5G26 (318 aa).

Residues 1-28 lie on the Extracellular side of the membrane; it reads MMHRNQTVVTEFFFTGLTSSFHLQIVLF. A glycan (N-linked (GlcNAc...) asparagine) is linked at asparagine 5. Residues 29–49 traverse the membrane as a helical segment; that stretch reads LTFLCVYLATLLGNLGMIILI. The Cytoplasmic portion of the chain corresponds to 50 to 56; sequence HLDTRLH. A helical transmembrane segment spans residues 57-77; the sequence is IPMYFFLSHLSFVDACSSSVI. The Extracellular segment spans residues 78-93; sequence SPKMLSDMFVDKKVIS. Residues 94-114 traverse the membrane as a helical segment; the sequence is FLGCAIQLCLFSQFVVTECFL. Cysteine 97 and cysteine 189 are joined by a disulfide. The Cytoplasmic segment spans residues 115–144; it reads LASMAYDRYVAICKPLLYTLIMSQRVCVQL. The chain crosses the membrane as a helical span at residues 145–165; that stretch reads VIGPYSIGFVSTMVHIISAFV. The Extracellular segment spans residues 166 to 198; sequence LPYCGPNLINHFFCDLLPVLSLACANTQMKKRL. A helical membrane pass occupies residues 199–219; it reads LFIVAGILGVFSGIIILVSYV. The Cytoplasmic portion of the chain corresponds to 220–239; that stretch reads YIAITILKISSADGRRKAFS. A helical membrane pass occupies residues 240 to 260; the sequence is TCSSHLTAVSILYGTLFFIYV. At 261–271 the chain is on the extracellular side; that stretch reads RPSSSFSLDIN. Residues 272-292 form a helical membrane-spanning segment; it reads KVVSLFYTTVIPMLNPFIYSL. At 293 to 318 the chain is on the cytoplasmic side; it reads RNKEVKDALIRTFEKQFCYSFQDKIL.

It belongs to the G-protein coupled receptor 1 family.

The protein resides in the cell membrane. Functionally, potential odorant receptor. The polypeptide is Olfactory receptor 5G26 (Mus musculus (Mouse)).